The following is a 210-amino-acid chain: Na(+)-translocating NADH-quinone reductase subunit D (210 aa).

A run of 6 helical transmembrane segments spans residues proline 14 to valine 34, leucine 42 to isoleucine 62, isoleucine 72 to alanine 92, valine 103 to methionine 123, phenylalanine 131 to valine 151, and asparagine 178 to isoleucine 198.

This sequence belongs to the NqrDE/RnfAE family. As to quaternary structure, composed of six subunits; NqrA, NqrB, NqrC, NqrD, NqrE and NqrF.

The protein resides in the cell inner membrane. It catalyses the reaction a ubiquinone + n Na(+)(in) + NADH + H(+) = a ubiquinol + n Na(+)(out) + NAD(+). Functionally, NQR complex catalyzes the reduction of ubiquinone-1 to ubiquinol by two successive reactions, coupled with the transport of Na(+) ions from the cytoplasm to the periplasm. NqrA to NqrE are probably involved in the second step, the conversion of ubisemiquinone to ubiquinol. This Shewanella baltica (strain OS223) protein is Na(+)-translocating NADH-quinone reductase subunit D.